We begin with the raw amino-acid sequence, 230 residues long: uncharacterized protein (230 aa).

The signal sequence occupies residues 1-21 (MARYDARLRGIGKAHACSAFA). The segment at 47–190 (SASVQENFIA…TVQTSSSGDP (144 aa)) is disordered. The span at 141–150 (PQSQTSANSQ) shows a compositional bias: polar residues. Residues 151–165 (KKPEIRCRERSKNAR) show a composition bias toward basic and acidic residues. The span at 173 to 188 (AVATNEAETVQTSSSG) shows a compositional bias: polar residues.

The protein to R.meliloti RA0936 and y4aO.

This is an uncharacterized protein from Sinorhizobium fredii (strain NBRC 101917 / NGR234).